A 332-amino-acid polypeptide reads, in one-letter code: Adenosine deaminase (332 aa).

Positions 12 and 14 each coordinate Zn(2+). Substrate contacts are provided by H14, D16, and G169. H196 serves as a coordination point for Zn(2+). The active-site Proton donor is E199. Residue D277 coordinates Zn(2+).

Belongs to the metallo-dependent hydrolases superfamily. Adenosine and AMP deaminases family. Adenosine deaminase subfamily. Requires Zn(2+) as cofactor.

The catalysed reaction is adenosine + H2O + H(+) = inosine + NH4(+). It carries out the reaction 2'-deoxyadenosine + H2O + H(+) = 2'-deoxyinosine + NH4(+). Functionally, catalyzes the hydrolytic deamination of adenosine and 2-deoxyadenosine. The chain is Adenosine deaminase from Vibrio atlanticus (strain LGP32) (Vibrio splendidus (strain Mel32)).